The chain runs to 919 residues: Probable dipeptidyl-aminopeptidase B (919 aa).

Basic and acidic residues predominate over residues 1–10; sequence MRPSDDHGET. Residues 1 to 50 are disordered; it reads MRPSDDHGETSEFLPITRSRSVSAASQTSTDSSLSTESLFPGEQKPFPNV. At 1-92 the chain is on the cytoplasmic side; sequence MRPSDDHGET…AATGGGRARR (92 aa). Residues 21 to 38 show a composition bias toward low complexity; sequence SVSAASQTSTDSSLSTES. Residues 93–113 form a helical; Signal-anchor for type II membrane protein membrane-spanning segment; sequence IFWILVLLCLGGWLLAFALFL. Residues 114–919 are Vacuolar-facing; it reads TGGRANYQTA…MKRSLPLLYP (806 aa). Asn-200, Asn-352, and Asn-643 each carry an N-linked (GlcNAc...) asparagine glycan. The active-site Charge relay system is the Ser-757. Asn-811 is a glycosylation site (N-linked (GlcNAc...) asparagine). Residues Asp-834 and His-867 each act as charge relay system in the active site.

Belongs to the peptidase S9B family.

Its subcellular location is the vacuole membrane. The enzyme catalyses Release of an N-terminal dipeptide, Xaa-Yaa-|-Zaa-, from a polypeptide, preferentially when Yaa is Pro, provided Zaa is neither Pro nor hydroxyproline.. In terms of biological role, type IV dipeptidyl-peptidase which removes N-terminal dipeptides sequentially from polypeptides having unsubstituted N-termini provided that the penultimate residue is proline. This chain is Probable dipeptidyl-aminopeptidase B (dapB), found in Neosartorya fischeri (strain ATCC 1020 / DSM 3700 / CBS 544.65 / FGSC A1164 / JCM 1740 / NRRL 181 / WB 181) (Aspergillus fischerianus).